The primary structure comprises 81 residues: Exodeoxyribonuclease 7 small subunit (81 aa).

The protein belongs to the XseB family. Heterooligomer composed of large and small subunits.

Its subcellular location is the cytoplasm. It catalyses the reaction Exonucleolytic cleavage in either 5'- to 3'- or 3'- to 5'-direction to yield nucleoside 5'-phosphates.. In terms of biological role, bidirectionally degrades single-stranded DNA into large acid-insoluble oligonucleotides, which are then degraded further into small acid-soluble oligonucleotides. The chain is Exodeoxyribonuclease 7 small subunit from Rhodopseudomonas palustris (strain BisA53).